The chain runs to 374 residues: 4-galactosyl-N-acetylglucosaminide 3-alpha-L-fucosyltransferase FUT5 (374 aa).

At 1 to 15 the chain is on the cytoplasmic side; sequence MDPLGPAKPQWLWRR. The chain crosses the membrane as a helical; Signal-anchor for type II membrane protein span at residues 16-34; it reads CLAGLLFQLLVAVCFFSYL. The Lumenal segment spans residues 35–374; the sequence is RVSQDHATGS…TVRSIAAWFT (340 aa). N-linked (GlcNAc...) asparagine glycans are attached at residues N60, N105, N167, and N198.

It belongs to the glycosyltransferase 10 family.

It is found in the golgi apparatus. It localises to the golgi stack membrane. The enzyme catalyses a beta-D-galactosyl-(1-&gt;3)-N-acetyl-beta-D-glucosaminyl derivative + GDP-beta-L-fucose = a beta-D-galactosyl-(1-&gt;3)-[alpha-L-fucosyl-(1-&gt;4)]-N-acetyl-beta-D-glucosaminyl derivative + GDP + H(+). The catalysed reaction is an N-acetyl-alpha-neuraminyl-(2-&gt;3)-beta-D-galactosyl-(1-&gt;4)-N-acetyl-beta-D-glucosaminyl derivative + GDP-beta-L-fucose = an alpha-Neu5Ac-(2-&gt;3)-beta-D-Gal-(1-&gt;4)-[alpha-L-Fuc-(1-&gt;3)]-beta-D-GlcNAc derivative + GDP + H(+). It catalyses the reaction an alpha-Neu5Ac-(2-&gt;3)-beta-D-Gal-(1-&gt;4)-beta-D-GlcNAc-(1-&gt;3)-beta-D-Gal-(1-&gt;4)-[alpha-L-Fuc-(1-&gt;3)]-beta-D-GlcNAc derivative + GDP-beta-L-fucose = an alpha-Neu5Ac-(2-&gt;3)-beta-D-Gal-(1-&gt;4)-[alpha-L-Fuc-(1-&gt;3)]-beta-D-GlcNAc-(1-&gt;3)-beta-D-Gal-(1-&gt;4)-[alpha-L-Fuc-(1-&gt;3)]-beta-D-GlcNAc derivative + GDP + H(+). It carries out the reaction a beta-D-galactosyl-(1-&gt;4)-N-acetyl-beta-D-glucosaminyl derivative + GDP-beta-L-fucose = a beta-D-galactosyl-(1-&gt;4)-[alpha-L-fucosyl-(1-&gt;3)]-N-acetyl-beta-D-glucosaminyl derivative + GDP + H(+). The enzyme catalyses a neolactoside nLc4Cer + GDP-beta-L-fucose = a neolactoside III(3)-alpha-Fuc-nLc4Cer + GDP + H(+). The catalysed reaction is a neolactoside nLc6Cer + GDP-beta-L-fucose = beta-D-galactosyl-(1-&gt;4)-N-acetyl-beta-D-glucosaminyl-(1-&gt;3)-beta-D-galactosyl-(1-&gt;4)-[alpha-L-fucosyl-(1-&gt;3)]-N-acetyl-beta-D-glucosaminyl-(1-&gt;3)-beta-D-galactosyl-(1-&gt;4)-beta-D-glucosyl-(1&lt;-&gt;1')-ceramide + GDP + H(+). It catalyses the reaction a neolactoside nLc6Cer(d18:1(4E)) + GDP-beta-L-fucose = a neolactoside III(3)-alpha-Fuc-nLc6Cer(d18:1(4E)) + GDP + H(+). It carries out the reaction a neolactoside nLc4Cer(d18:1(4E)) + GDP-beta-L-fucose = a neolactoside III(3)-alpha-Fuc-nLc4Cer(d18:1(4E)) + GDP + H(+). The enzyme catalyses a neolactoside VI(3)-alpha-NeuNAc-nLc6Cer + GDP-beta-L-fucose = a neolactoside VI(3)-alpha-NeuAc,III(3)-alphaFuc-nLc6Cer + GDP + H(+). The catalysed reaction is beta-D-galactosyl-(1-&gt;4)-N-acetyl-D-glucosamine + GDP-beta-L-fucose = beta-D-galactosyl-(1-&gt;4)-[alpha-L-fucosyl-(1-&gt;3)]-N-acetyl-D-glucosamine + GDP + H(+). It catalyses the reaction N-acetyl-alpha-neuraminosyl-(2-&gt;3)-beta-D-galactosyl-(1-&gt;4)-N-acetyl-beta-D-glucosamine + GDP-beta-L-fucose = N-acetyl-alpha-neuraminosyl-(2-&gt;3)-beta-D-galactosyl-(1-&gt;4)-[alpha-L-fucosyl-(1-&gt;3)]-N-acetyl-beta-D-glucosamine + GDP + H(+). It carries out the reaction alpha-L-Fuc-(1-&gt;2)-beta-D-Gal-(1-&gt;4)-D-GlcNAc + GDP-beta-L-fucose = alpha-L-Fuc-(1-&gt;2)-beta-D-Gal-(1-&gt;4)-[alpha-L-Fuc-(1-&gt;3)]-D-GlcNAc + GDP + H(+). The enzyme catalyses an alpha-Neu5Ac-(2-&gt;3)-beta-D-Gal-(1-&gt;3)-D-GlcNAc derivative + GDP-beta-L-fucose = an alpha-Neu5Ac-(2-&gt;3)-beta-D-Gal-(1-&gt;3)-[alpha-L-Fuc-(1-&gt;4)]-beta-D-GlcNAc derivative + GDP + H(+). The protein operates within protein modification; protein glycosylation. In terms of biological role, catalyzes preferentially the transfer of L-fucose, from a guanosine diphosphate-beta-L-fucose, to the N-acetyl-beta-D-glucosamine (GlcNAc) of an N-acetyllactosamine unit (type 2 chain) of an oligosaccharide, or a glycoprotein- and a glycolipid-linked N-acetyllactosamine unit via an alpha (1,3) linkage and participates in the surface expression of VIM-2, Lewis X/SSEA-1 and sialyl Lewis X antigens. Preferentially transfers fucose to the GlcNAc of an internal N-acetyllactosamine unit of a poly-N-acetyllactosamine chain acceptor substrate. Also catalyzes to a lesser extend the transfer of L-fucose to the GlcNAc of a type 1 (beta-D-galactosyl-(1-&gt;3)-N-acetyl-beta-D-glucosaminyl) or H-type 1 (alpha-L-Fuc-(1-&gt;2)-beta-D-Gal-(1-&gt;3)-D-GlcNAc) chain oligosaccharide via an alpha (1,4) linkage. Preferentially catalyzes sialylated type 2 oligosaccharide acceptors over neutral type 2 or H type 2 (alpha-L-Fuc-(1-&gt;2)-beta-D-Gal-(1-&gt;4)-D-GlcNAc) oligosaccharide acceptors. Lactose-based structures are also acceptor substrates. This Gorilla gorilla gorilla (Western lowland gorilla) protein is 4-galactosyl-N-acetylglucosaminide 3-alpha-L-fucosyltransferase FUT5.